Reading from the N-terminus, the 156-residue chain is ATP synthase subunit b (156 aa).

A helical membrane pass occupies residues 13-33; that stretch reads AFIIFVWFCMKFVWPPLMNAI.

The protein belongs to the ATPase B chain family. In terms of assembly, F-type ATPases have 2 components, F(1) - the catalytic core - and F(0) - the membrane proton channel. F(1) has five subunits: alpha(3), beta(3), gamma(1), delta(1), epsilon(1). F(0) has three main subunits: a(1), b(2) and c(10-14). The alpha and beta chains form an alternating ring which encloses part of the gamma chain. F(1) is attached to F(0) by a central stalk formed by the gamma and epsilon chains, while a peripheral stalk is formed by the delta and b chains.

Its subcellular location is the cell inner membrane. Its function is as follows. F(1)F(0) ATP synthase produces ATP from ADP in the presence of a proton or sodium gradient. F-type ATPases consist of two structural domains, F(1) containing the extramembraneous catalytic core and F(0) containing the membrane proton channel, linked together by a central stalk and a peripheral stalk. During catalysis, ATP synthesis in the catalytic domain of F(1) is coupled via a rotary mechanism of the central stalk subunits to proton translocation. Functionally, component of the F(0) channel, it forms part of the peripheral stalk, linking F(1) to F(0). The protein is ATP synthase subunit b of Shewanella sediminis (strain HAW-EB3).